We begin with the raw amino-acid sequence, 96 residues long: uncharacterized protein (96 aa).

The protein belongs to the mulikevirus gp14 protein family.

The protein localises to the host cytoplasm. This is an uncharacterized protein from Escherichia coli (Bacteriophage D108).